Here is a 207-residue protein sequence, read N- to C-terminus: Thiamine-phosphate synthase (207 aa).

Residues 35–39 (QYRDK) and Asn67 contribute to the 4-amino-2-methyl-5-(diphosphooxymethyl)pyrimidine site. Mg(2+) contacts are provided by Asp68 and Asp86. Thr105 is a binding site for 4-amino-2-methyl-5-(diphosphooxymethyl)pyrimidine. 132–134 (SVT) lines the 2-[(2R,5Z)-2-carboxy-4-methylthiazol-5(2H)-ylidene]ethyl phosphate pocket. Lys135 lines the 4-amino-2-methyl-5-(diphosphooxymethyl)pyrimidine pocket. 2-[(2R,5Z)-2-carboxy-4-methylthiazol-5(2H)-ylidene]ethyl phosphate is bound at residue Gly162.

It belongs to the thiamine-phosphate synthase family. Requires Mg(2+) as cofactor.

The catalysed reaction is 2-[(2R,5Z)-2-carboxy-4-methylthiazol-5(2H)-ylidene]ethyl phosphate + 4-amino-2-methyl-5-(diphosphooxymethyl)pyrimidine + 2 H(+) = thiamine phosphate + CO2 + diphosphate. It catalyses the reaction 2-(2-carboxy-4-methylthiazol-5-yl)ethyl phosphate + 4-amino-2-methyl-5-(diphosphooxymethyl)pyrimidine + 2 H(+) = thiamine phosphate + CO2 + diphosphate. The enzyme catalyses 4-methyl-5-(2-phosphooxyethyl)-thiazole + 4-amino-2-methyl-5-(diphosphooxymethyl)pyrimidine + H(+) = thiamine phosphate + diphosphate. It participates in cofactor biosynthesis; thiamine diphosphate biosynthesis; thiamine phosphate from 4-amino-2-methyl-5-diphosphomethylpyrimidine and 4-methyl-5-(2-phosphoethyl)-thiazole: step 1/1. Its function is as follows. Condenses 4-methyl-5-(beta-hydroxyethyl)thiazole monophosphate (THZ-P) and 2-methyl-4-amino-5-hydroxymethyl pyrimidine pyrophosphate (HMP-PP) to form thiamine monophosphate (TMP). The polypeptide is Thiamine-phosphate synthase (Pseudomonas putida (strain GB-1)).